Reading from the N-terminus, the 45-residue chain is Monellin chain A (45 aa).

As to quaternary structure, heterodimer of an A chain and a B chain.

Taste-modifying protein; intensely sweet-tasting protein. The protein is Monellin chain A of Dioscoreophyllum cumminsii (Serendipity berry).